The following is a 272-amino-acid chain: Tryptophan synthase alpha chain (272 aa).

Residues Glu-49 and Glu-60 each act as proton acceptor in the active site.

The protein belongs to the TrpA family. As to quaternary structure, tetramer of two alpha and two beta chains.

The catalysed reaction is (1S,2R)-1-C-(indol-3-yl)glycerol 3-phosphate + L-serine = D-glyceraldehyde 3-phosphate + L-tryptophan + H2O. It participates in amino-acid biosynthesis; L-tryptophan biosynthesis; L-tryptophan from chorismate: step 5/5. Its function is as follows. The alpha subunit is responsible for the aldol cleavage of indoleglycerol phosphate to indole and glyceraldehyde 3-phosphate. The polypeptide is Tryptophan synthase alpha chain (Legionella pneumophila (strain Lens)).